The chain runs to 144 residues: UPF0102 protein sce2912 (144 aa).

The protein belongs to the UPF0102 family.

The polypeptide is UPF0102 protein sce2912 (Sorangium cellulosum (strain So ce56) (Polyangium cellulosum (strain So ce56))).